A 228-amino-acid chain; its full sequence is Putative adhesin A1I_01215 (228 aa).

Positions 1-22 are cleaved as a signal peptide; it reads MKKLLLIAATSATVLSSALSFA.

This Rickettsia bellii (strain OSU 85-389) protein is Putative adhesin A1I_01215.